A 532-amino-acid polypeptide reads, in one-letter code: Intercellular adhesion molecule 1 (532 aa).

Residues 1–27 form the signal peptide; sequence MAPSGPQPALPILVVLLGALLLGPGNA. Topologically, residues 28–480 are extracellular; sequence QTSVFPPEVI…TVNVLSPRYE (453 aa). Ig-like C2-type domains follow at residues 41–103 and 128–193; these read GGSV…QSSA and GKNL…LDLR. A glycan (N-linked (GlcNAc...) asparagine) is linked at Asn47. 2 disulfides stabilise this stretch: Cys48–Cys92 and Cys52–Cys96. N-linked (GlcNAc...) asparagine glycosylation is found at Asn130 and Asn145. Residues Cys135 and Cys186 are joined by a disulfide bond. The Cell attachment site; atypical signature appears at 152–154; it reads RGE. 5 N-linked (GlcNAc...) asparagine glycosylation sites follow: Asn183, Asn202, Asn267, Asn296, and Asn316. The 68-residue stretch at 230–297 folds into the Ig-like C2-type 3 domain; it reads DTQGTVVCSL…LLCGVMLGNQ (68 aa). Cys237 and Cys290 are disulfide-bonded. Positions 325-378 constitute an Ig-like C2-type 4 domain; that stretch reads GTEVIVECEAHPRAKVMLNGVPAQPPGPRAQFLLKATPEDNGRSFSCSATLEVA. Cys332 and Cys371 form a disulfide bridge. Residues Asn385 and Asn406 are each glycosylated (N-linked (GlcNAc...) asparagine). 3 disulfides stabilise this stretch: Cys403-Cys419, Cys419-Cys457, and Cys431-Cys457. One can recognise an Ig-like C2-type 5 domain in the interval 412–464; sequence NSQQTPMCQAWGNPLPQLKCLKDGTFPLPIGQSVTVTRDLEGTYLCQARSTRG. A helical transmembrane segment spans residues 481 to 503; that stretch reads VVIIPVVAAAVILGTAGVATYLY. Residues 504–532 are Cytoplasmic-facing; sequence NRQRKIRKYRLQQAQNGTPMKPNTQATPP. A disordered region spans residues 513-532; that stretch reads RLQQAQNGTPMKPNTQATPP. Residues 515–532 are compositionally biased toward polar residues; sequence QQAQNGTPMKPNTQATPP. Phosphothreonine occurs at positions 521 and 530.

Belongs to the immunoglobulin superfamily. ICAM family. Homodimer. Interacts with MUC1 and promotes cell aggregation in epithelial cells. Interacts with ARHGEF26/SGEF. Interacts (on T cell side) with CD81, CD247 and CD9 at immunological synapses between antigen-presenting cells and T cells. Monoubiquitinated, which is promoted by MARCH9 and leads to endocytosis.

It is found in the membrane. ICAM proteins are ligands for the leukocyte adhesion protein LFA-1 (integrin alpha-L/beta-2). During leukocyte trans-endothelial migration, ICAM1 engagement promotes the assembly of endothelial apical cups through ARHGEF26/SGEF and RHOG activation. The sequence is that of Intercellular adhesion molecule 1 (ICAM1) from Macaca mulatta (Rhesus macaque).